Here is a 918-residue protein sequence, read N- to C-terminus: Protein translocase subunit SecA (918 aa).

ATP-binding positions include Gln-87, 105–109 (GEGKT), and Asp-516. Zn(2+)-binding residues include Cys-902, Cys-904, Cys-913, and His-914.

This sequence belongs to the SecA family. Monomer and homodimer. Part of the essential Sec protein translocation apparatus which comprises SecA, SecYEG and auxiliary proteins SecDF-YajC and YidC. Requires Zn(2+) as cofactor.

It localises to the cell inner membrane. The protein resides in the cytoplasm. The enzyme catalyses ATP + H2O + cellular proteinSide 1 = ADP + phosphate + cellular proteinSide 2.. Part of the Sec protein translocase complex. Interacts with the SecYEG preprotein conducting channel. Has a central role in coupling the hydrolysis of ATP to the transfer of proteins into and across the cell membrane, serving both as a receptor for the preprotein-SecB complex and as an ATP-driven molecular motor driving the stepwise translocation of polypeptide chains across the membrane. The chain is Protein translocase subunit SecA from Methylibium petroleiphilum (strain ATCC BAA-1232 / LMG 22953 / PM1).